The sequence spans 337 residues: UDP-3-O-acylglucosamine N-acyltransferase (337 aa).

His238 functions as the Proton acceptor in the catalytic mechanism.

It belongs to the transferase hexapeptide repeat family. LpxD subfamily. Homotrimer.

It carries out the reaction a UDP-3-O-[(3R)-3-hydroxyacyl]-alpha-D-glucosamine + a (3R)-hydroxyacyl-[ACP] = a UDP-2-N,3-O-bis[(3R)-3-hydroxyacyl]-alpha-D-glucosamine + holo-[ACP] + H(+). It functions in the pathway bacterial outer membrane biogenesis; LPS lipid A biosynthesis. Functionally, catalyzes the N-acylation of UDP-3-O-acylglucosamine using 3-hydroxyacyl-ACP as the acyl donor. Is involved in the biosynthesis of lipid A, a phosphorylated glycolipid that anchors the lipopolysaccharide to the outer membrane of the cell. The chain is UDP-3-O-acylglucosamine N-acyltransferase from Xanthomonas axonopodis pv. citri (strain 306).